The following is a 478-amino-acid chain: Divinyl ether synthase CYP74D1 (478 aa).

C431 contacts heme.

Belongs to the cytochrome P450 family. 9-divinyl ether synthase subfamily. Expressed in roots. Detected in stems, but not in flower buds, petioles, cotyledons or leaves.

The enzyme catalyses (9S)-hydroperoxy-(10E,12Z)-octadecadienoate = colneleate + H2O. It catalyses the reaction (9S)-hydroperoxy-(10E,12Z,15Z)-octadecatrienoate = colnelenate + H2O. Functionally, involved in the biosynthesis of the anti-fungal toxins colneleate and colnelenate. Can use (9S)-hydroperoxy-(10E,12Z)-octadecadienoate (9-HPOD) and (9S)-hydroperoxy-(10E,12Z,15Z)-octadecatrienoate (9-HPOT) as substrates, but has a very low activity with the corresponding 13-hydroperoxides (13-HPOD and 13-POT). In Solanum lycopersicum (Tomato), this protein is Divinyl ether synthase CYP74D1.